Reading from the N-terminus, the 160-residue chain is Cytochrome b6-f complex subunit 4 (160 aa).

A run of 3 helical transmembrane segments spans residues 36–56 (LLYMFPVCILGTIACNVGLAV), 95–115 (LLGVLLMASVPVGLITVPFIE), and 131–151 (TIFLIGTVVAVWLGIGATLPI).

This sequence belongs to the cytochrome b family. PetD subfamily. The 4 large subunits of the cytochrome b6-f complex are cytochrome b6, subunit IV (17 kDa polypeptide, petD), cytochrome f and the Rieske protein, while the 4 small subunits are petG, petL, petM and petN. The complex functions as a dimer.

It localises to the plastid. It is found in the chloroplast thylakoid membrane. Its function is as follows. Component of the cytochrome b6-f complex, which mediates electron transfer between photosystem II (PSII) and photosystem I (PSI), cyclic electron flow around PSI, and state transitions. This chain is Cytochrome b6-f complex subunit 4, found in Staurastrum punctulatum (Green alga).